The sequence spans 399 residues: Aromatic-amino-acid aminotransferase (399 aa).

Residues G36, Y67, W132, and N184 each coordinate substrate. K247 is subject to N6-(pyridoxal phosphate)lysine. Substrate is bound at residue R375.

The protein belongs to the class-I pyridoxal-phosphate-dependent aminotransferase family. As to quaternary structure, homodimer. Pyridoxal 5'-phosphate is required as a cofactor.

It is found in the cytoplasm. The enzyme catalyses an aromatic L-alpha-amino acid + 2-oxoglutarate = an aromatic oxo-acid + L-glutamate. The chain is Aromatic-amino-acid aminotransferase (phhC) from Pseudomonas aeruginosa (strain ATCC 15692 / DSM 22644 / CIP 104116 / JCM 14847 / LMG 12228 / 1C / PRS 101 / PAO1).